The sequence spans 170 residues: Lipoprotein signal peptidase (170 aa).

The next 3 helical transmembrane spans lie at 9 to 29 (IGSVIFIFILVFIDQWSKYLV), 72 to 92 (LFFLVIPIIILVFVFCFILKE), and 93 to 113 (TNKIARIALILILSGGIGNII). Residues D124 and D146 contribute to the active site. A helical membrane pass occupies residues 142–162 (FNFADSYVVIGITLFIIYDLF).

It belongs to the peptidase A8 family.

The protein resides in the cell inner membrane. The catalysed reaction is Release of signal peptides from bacterial membrane prolipoproteins. Hydrolyzes -Xaa-Yaa-Zaa-|-(S,diacylglyceryl)Cys-, in which Xaa is hydrophobic (preferably Leu), and Yaa (Ala or Ser) and Zaa (Gly or Ala) have small, neutral side chains.. The protein operates within protein modification; lipoprotein biosynthesis (signal peptide cleavage). Its function is as follows. This protein specifically catalyzes the removal of signal peptides from prolipoproteins. This Borrelia hermsii (strain HS1 / DAH) protein is Lipoprotein signal peptidase.